A 258-amino-acid polypeptide reads, in one-letter code: Venom plasminogen activator LV-PA (258 aa).

The first 18 residues, 1-18, serve as a signal peptide directing secretion; that stretch reads MVLITVLANLLILQLSYA. Residues 19 to 24 constitute a propeptide that is removed on maturation; that stretch reads QKSSKL. Residues 25 to 249 form the Peptidase S1 domain; sequence VFGGDECNIN…YTDWIQSIIA (225 aa). Asn44 carries an N-linked (GlcNAc...) asparagine glycan. Cysteines 50 and 66 form a disulfide. Residues His65 and Asp110 each act as charge relay system in the active site. Disulfide bonds link Cys142–Cys210, Cys174–Cys189, and Cys200–Cys225. Ser204 acts as the Charge relay system in catalysis.

Belongs to the peptidase S1 family. Snake venom subfamily. As to quaternary structure, monomer. In terms of processing, N-glycosylated. PubMed:17034951 shows that it contains approximately 10% carbohydrates, PubMed:10871053 shows that it contains approximately 20% carbohydrates. As to expression, expressed by the venom gland.

It is found in the secreted. Inhibited by the serine protease inhibitors NPGB, PMSF, p-aminobenzamidine and aprotinin. Not inhibited by soybean trypsin inhibitor or EDTA. Snake venom serine protease that activates plasminogen. Weakly hydrolyzes the alpha chain of human fibrinogen without releasing fibrinopeptide A. Does not hydrolyze plasma kallikrein or factor Xa. Does not clot fibrinogen. Does not affect platelet function. Induces hypotensive effects on rats. Shows a preferential cleavage at Lys-|-Xaa over Arg-|-Xaa bonds. The protein is Venom plasminogen activator LV-PA of Lachesis muta muta (Bushmaster).